A 287-amino-acid polypeptide reads, in one-letter code: Formamidopyrimidine-DNA glycosylase (287 aa).

The active-site Schiff-base intermediate with DNA is the proline 2. Glutamate 3 (proton donor) is an active-site residue. Lysine 58 (proton donor; for beta-elimination activity) is an active-site residue. Histidine 104, arginine 123, and arginine 166 together coordinate DNA. Residues 251 to 287 (RVYDREGEPCPTPACKGVIAREVQAGRSTFFCPVCQV) form an FPG-type zinc finger. The Proton donor; for delta-elimination activity role is filled by arginine 277.

Belongs to the FPG family. Monomer. The cofactor is Zn(2+).

The enzyme catalyses Hydrolysis of DNA containing ring-opened 7-methylguanine residues, releasing 2,6-diamino-4-hydroxy-5-(N-methyl)formamidopyrimidine.. It catalyses the reaction 2'-deoxyribonucleotide-(2'-deoxyribose 5'-phosphate)-2'-deoxyribonucleotide-DNA = a 3'-end 2'-deoxyribonucleotide-(2,3-dehydro-2,3-deoxyribose 5'-phosphate)-DNA + a 5'-end 5'-phospho-2'-deoxyribonucleoside-DNA + H(+). In terms of biological role, involved in base excision repair of DNA damaged by oxidation or by mutagenic agents. Acts as a DNA glycosylase that recognizes and removes damaged bases. Has a preference for oxidized purines, such as 7,8-dihydro-8-oxoguanine (8-oxoG). Has AP (apurinic/apyrimidinic) lyase activity and introduces nicks in the DNA strand. Cleaves the DNA backbone by beta-delta elimination to generate a single-strand break at the site of the removed base with both 3'- and 5'-phosphates. In Caulobacter vibrioides (strain ATCC 19089 / CIP 103742 / CB 15) (Caulobacter crescentus), this protein is Formamidopyrimidine-DNA glycosylase.